A 211-amino-acid polypeptide reads, in one-letter code: C-type lectin domain-containing protein 158 (211 aa).

The first 16 residues, 1–16, serve as a signal peptide directing secretion; it reads MQKFILSAFVVALVAA.

The sequence is that of C-type lectin domain-containing protein 158 (clec-158) from Caenorhabditis elegans.